The following is a 229-amino-acid chain: Potassium/proton antiporter CemA (229 aa).

2 helical membrane-spanning segments follow: residues 114 to 134 (IIYF…LIIL) and 189 to 209 (IISG…KYWI).

This sequence belongs to the CemA family.

It is found in the plastid. The protein localises to the chloroplast inner membrane. It carries out the reaction K(+)(in) + H(+)(out) = K(+)(out) + H(+)(in). Contributes to K(+)/H(+) antiport activity by supporting proton efflux to control proton extrusion and homeostasis in chloroplasts in a light-dependent manner to modulate photosynthesis. Prevents excessive induction of non-photochemical quenching (NPQ) under continuous-light conditions. Indirectly promotes efficient inorganic carbon uptake into chloroplasts. The polypeptide is Potassium/proton antiporter CemA (Lotus japonicus (Lotus corniculatus var. japonicus)).